Reading from the N-terminus, the 353-residue chain is Guanine nucleotide-binding protein subunit alpha (353 aa).

Residues 1-25 form a disordered region; the sequence is MGCGMSTEDKEGKARNEEIENQLKR. The N-myristoyl glycine moiety is linked to residue G2. The S-palmitoyl cysteine moiety is linked to residue C3. Residues 7–25 are compositionally biased toward basic and acidic residues; it reads TEDKEGKARNEEIENQLKR. The G-alpha domain maps to 32–353; that stretch reads NEIKMLLLGA…QENLRLCGLI (322 aa). The tract at residues 35–48 is G1 motif; that stretch reads KMLLLGAGESGKST. Positions 43, 44, 45, 46, 47, 48, 150, 175, 181, 203, 269, 270, 272, and 325 each coordinate GTP. S47 serves as a coordination point for Mg(2+). The tract at residues 173 to 181 is G2 motif; sequence DVLRSRVKT. T181 is a binding site for Mg(2+). Residues 196–205 form a G3 motif region; it reads YRMFDVGGQR. The tract at residues 265 to 272 is G4 motif; it reads ILFLNKID. Positions 323-328 are G5 motif; the sequence is TCATDT.

The protein belongs to the G-alpha family. G(q) subfamily. G proteins are composed of 3 units; alpha, beta and gamma. The alpha chain contains the guanine nucleotide binding site. The cofactor is Mg(2+).

In terms of biological role, guanine nucleotide-binding proteins (G proteins) are involved as modulators or transducers in various transmembrane signaling systems. This chain is Guanine nucleotide-binding protein subunit alpha (fadA), found in Emericella nidulans (strain FGSC A4 / ATCC 38163 / CBS 112.46 / NRRL 194 / M139) (Aspergillus nidulans).